The following is a 406-amino-acid chain: MSATIEREFEELDAQCRWQPLYLEIRNESHDYPHRVAKFPENRNRNRYRDVSPYDHSRVKLQSTENDYINASLVDIEEAQRSYILTQGPLPNTCCHFWLMVWQQKTKAVVMLNRTVEKESVKCAQYWPTDDREMVFKETGFSVKLLSEDVKSYYTVHLLQLENINTGETRTISHFHYTTWPDFGVPESPASFLNFLFKVRESGCLTPDHGPAVIHCSAGIGRSGTFSLVDTCLVLMEKGEDVNVKQLLLNMRKYRMGLIQTPDQLRFSYMAIIEGAKYTKGDSNIQKRWKELSKEDLSPICDHSQNRVMVEKYNGKRIGSEDEKLTGLPSKVQDTVEESSESILRKRIREDRKATTAQKVQQMKQRLNETERKRKRWLYWQPILTKMGFVSVILVGALVGWTLLFH.

Positions 5–275 (IEREFEELDA…RFSYMAIIEG (271 aa)) constitute a Tyrosine-protein phosphatase domain. Phosphotyrosine is present on tyrosine 22. Serine 52 carries the post-translational modification Phosphoserine. Tyrosine 68 is modified (phosphotyrosine). Residues aspartate 182, 216 to 222 (CSAGIGR), and glutamine 260 contribute to the substrate site. The active-site Phosphocysteine intermediate is the cysteine 216. Cysteine 216 carries the post-translational modification S-nitrosocysteine. Phosphoserine is present on residues serine 293, serine 298, serine 304, serine 320, and serine 339. The interval 341–406 (ESILRKRIRE…ALVGWTLLFH (66 aa)) is endoplasmic reticulum location. A mediates interaction with STX17 region spans residues 371–406 (ERKRKRWLYWQPILTKMGFVSVILVGALVGWTLLFH).

This sequence belongs to the protein-tyrosine phosphatase family. Non-receptor class 1 subfamily. Interacts with RMDN3. Isoform 1 interacts with TMED9. Isoform 1 interacts with STX17; dephosphorylates STX17. Interacts with ITGA1 (via cytoplasmic domain); activates the phosphatase activity towards EGFR. Interacts with TRAF2; probably involved in tumor necrosis factor-mediated signaling. Interacts with MET. Interacts with FAM220A and STAT3; interaction with FAM220A promotes interaction of PTPN2 with transcriptional activator STAT3, leading to dephosphorylation of STAT3 by PTPN2 and negative regulation of STAT3 transcriptional activator activity. In terms of processing, specifically phosphorylated in a cell cycle-dependent manner by cyclin-dependent kinases CDK1 and CDK2. Probably activated through phosphorylation by PKR. In terms of tissue distribution, ubiquitously expressed. The highest expression levels were found in ovary, testis, thymus and kidney.

The protein localises to the endoplasmic reticulum. It is found in the endoplasmic reticulum-Golgi intermediate compartment. It localises to the nucleus. Its subcellular location is the cytoplasm. The protein resides in the cell membrane. The enzyme catalyses O-phospho-L-tyrosyl-[protein] + H2O = L-tyrosyl-[protein] + phosphate. Non-receptor type tyrosine-specific phosphatase that dephosphorylates receptor protein tyrosine kinases including INSR, EGFR, CSF1R, PDGFR. Also dephosphorylates non-receptor protein tyrosine kinases like JAK1, JAK2, JAK3, Src family kinases, STAT1, STAT3 and STAT6 either in the nucleus or the cytoplasm. Negatively regulates numerous signaling pathways and biological processes like hematopoiesis, inflammatory response, cell proliferation and differentiation, and glucose homeostasis. Plays a multifaceted and important role in the development of the immune system. Functions in T-cell receptor signaling through dephosphorylation of FYN and LCK to control T-cells differentiation and activation. Dephosphorylates CSF1R, negatively regulating its downstream signaling and macrophage differentiation. Negatively regulates cytokine (IL2/interleukin-2 and interferon)-mediated signaling through dephosphorylation of the cytoplasmic kinases JAK1, JAK3 and their substrate STAT1, that propagate signaling downstream of the cytokine receptors. Also regulates the IL6/interleukin-6 and IL4/interleukin-4 cytokine signaling through dephosphorylation of STAT3 and STAT6 respectively. In addition to the immune system, it is involved in anchorage-dependent, negative regulation of EGF-stimulated cell growth. Activated by the integrin ITGA1/ITGB1, it dephosphorylates EGFR and negatively regulates EGF signaling. Dephosphorylates PDGFRB and negatively regulates platelet-derived growth factor receptor-beta signaling pathway and therefore cell proliferation. Negatively regulates tumor necrosis factor-mediated signaling downstream via MAPK through SRC dephosphorylation. May also regulate the hepatocyte growth factor receptor signaling pathway through dephosphorylation of the hepatocyte growth factor receptor MET. Also plays an important role in glucose homeostasis. For instance, negatively regulates the insulin receptor signaling pathway through the dephosphorylation of INSR and control gluconeogenesis and liver glucose production through negative regulation of the IL6 signaling pathways. May also bind DNA. The sequence is that of Tyrosine-protein phosphatase non-receptor type 2 (Ptpn2) from Mus musculus (Mouse).